Here is a 221-residue protein sequence, read N- to C-terminus: Queuosine precursor transporter (221 aa).

Topologically, residues 1–12 (MNVFSQTQRYKA) are cytoplasmic. Residues 13–33 (LFWLSLFHLLVITSSNYLVQL) traverse the membrane as a helical segment. Position 34 (Pro34) is a topological domain, periplasmic. A helical transmembrane segment spans residues 35–55 (VSILGFHTTWGAFSFPFIFLA). Topologically, residues 56 to 70 (TDLTVRIFGAPLARR) are cytoplasmic. Residues 71-91 (IIFAVMIPALLISYVISSLFY) form a helical membrane-spanning segment. Over 92 to 97 (MGSWQG) the chain is Periplasmic. The helical transmembrane segment at 98-118 (FGALAHFNLFVARIATASFMA) threads the bilayer. Residues 119 to 143 (YALGQILDVHVFNRLRQSRRWWLAP) lie on the Cytoplasmic side of the membrane. The helical transmembrane segment at 144–164 (TASTLFGNVSDTLAFFFIAFW) threads the bilayer. Residues 165 to 184 (RSPDAFMAEHWMEIALVDYC) lie on the Periplasmic side of the membrane. A helical transmembrane segment spans residues 185–205 (FKVLISIVFFLPMYGVLLNML). Topologically, residues 206–221 (LKRLADKSEINALQAS) are cytoplasmic.

This sequence belongs to the vitamin uptake transporter (VUT/ECF) (TC 2.A.88) family. Q precursor transporter subfamily.

It is found in the cell inner membrane. Involved in the import of queuosine (Q) precursors, required for Q precursor salvage. Transports 7-cyano-7-deazaguanine (preQ(0)) and 7-aminomethyl-7-deazaguanine (preQ(1)), with a preference for preQ(0). The polypeptide is Queuosine precursor transporter (yhhQ) (Escherichia coli (strain K12)).